The chain runs to 366 residues: tRNA/tmRNA (uracil-C(5))-methyltransferase (366 aa).

S-adenosyl-L-methionine is bound by residues glutamine 190, tyrosine 218, asparagine 223, glutamate 239, and aspartate 299. The active-site Nucleophile is cysteine 324. Glutamate 358 (proton acceptor) is an active-site residue.

It belongs to the class I-like SAM-binding methyltransferase superfamily. RNA M5U methyltransferase family. TrmA subfamily.

It carries out the reaction uridine(54) in tRNA + S-adenosyl-L-methionine = 5-methyluridine(54) in tRNA + S-adenosyl-L-homocysteine + H(+). The catalysed reaction is uridine(341) in tmRNA + S-adenosyl-L-methionine = 5-methyluridine(341) in tmRNA + S-adenosyl-L-homocysteine + H(+). Its function is as follows. Dual-specificity methyltransferase that catalyzes the formation of 5-methyluridine at position 54 (m5U54) in all tRNAs, and that of position 341 (m5U341) in tmRNA (transfer-mRNA). This chain is tRNA/tmRNA (uracil-C(5))-methyltransferase, found in Citrobacter koseri (strain ATCC BAA-895 / CDC 4225-83 / SGSC4696).